The chain runs to 322 residues: Ferredoxin--NADP reductase (322 aa).

Residues S14, D33, Q41, Y46, A86, F120, D278, and S319 each coordinate FAD.

Belongs to the ferredoxin--NADP reductase type 2 family. As to quaternary structure, homodimer. It depends on FAD as a cofactor.

The enzyme catalyses 2 reduced [2Fe-2S]-[ferredoxin] + NADP(+) + H(+) = 2 oxidized [2Fe-2S]-[ferredoxin] + NADPH. This Salinispora arenicola (strain CNS-205) protein is Ferredoxin--NADP reductase.